Reading from the N-terminus, the 669-residue chain is Cysteine-rich receptor-like protein kinase 34 (669 aa).

Residues 1 to 23 form the signal peptide; that stretch reads MKLKISFLPTFLIFLISLDSVTA. Gnk2-homologous domains lie at 24-123 and 133-246; these read QEIC…NVSF and ETLY…LYPY. The Extracellular segment spans residues 24–285; that stretch reads QEICFSGFFK…SDRANTTIKG (262 aa). Asn-35, Asn-52, Asn-103, Asn-120, Asn-147, Asn-172, Asn-252, and Asn-280 each carry an N-linked (GlcNAc...) asparagine glycan. The helical transmembrane segment at 286-306 threads the bilayer; the sequence is IIVAIVVPIIVILVSLVVLLV. The Cytoplasmic portion of the chain corresponds to 307 to 669; sequence VCRRKKSYKT…DASITEFYPR (363 aa). In terms of domain architecture, Protein kinase spans 345 to 624; the sequence is FSDSNMIGRG…MMLTSSTTTL (280 aa). ATP-binding positions include 351–359 and Lys-373; that span reads IGRGGFGEV. Tyr-418 carries the post-translational modification Phosphotyrosine. Asp-470 acts as the Proton acceptor in catalysis. Position 474 is a phosphoserine (Ser-474). Residue Thr-510 is modified to Phosphothreonine. Tyr-518 carries the post-translational modification Phosphotyrosine.

Belongs to the protein kinase superfamily. Ser/Thr protein kinase family. CRK subfamily.

Its subcellular location is the membrane. It catalyses the reaction L-seryl-[protein] + ATP = O-phospho-L-seryl-[protein] + ADP + H(+). The catalysed reaction is L-threonyl-[protein] + ATP = O-phospho-L-threonyl-[protein] + ADP + H(+). This Arabidopsis thaliana (Mouse-ear cress) protein is Cysteine-rich receptor-like protein kinase 34.